A 786-amino-acid chain; its full sequence is MPPKPLFPNVFPGDGAPRKRRLALALLAVPGLVPAVSYAQLSGAAAQPQPLDSPWDLRLAPQLEDRPLKDGAKPAAFVIADHTSGTAEQDLAAKGSAELRRGDVVVKADAIHYDQDTDMADAYGQVRINNSGTSFAGPEAHLKIEANQGFMTAPKYHFNMTGGSGSAERVDMVDNERSVFVNGTYTACQCSTNPAWYIKGSRFDFDTGADEGTARNGVLFFQGVPIFASPWMTFPLSGERRSGLLPPTFAMNSSNGFELSLPYYFNIAPNRDLTLTPRIISRRGVMTEATFRYLSPSYSGTFTANYLPDDRLAHRNRYAIYWQHQQNFGGGFGGYVYYNKVSDTTYPEDLGSTNQFVNGTQTLYQQEAGLTYNNGPWSVLARYQHWQTLPPSIAPYSREPQLNVKYTKYNVGGFDFGAEADYSRFRITTADATEGDRIVFNPYIAYGVYGPGYFVVPKVQYHFASYDLNYLSSTTPNSPKRFTESIPTVSFDTGLIFDRSVRLFGQDFIQTLEPRLYYVYTPYRDQSNAPLFDSAESDFGLAEIYQPNTFVGNDRIADANRITAGLTSRFIDPRTGDERARFVIAQQYYFADQRVTLNSGQSAVQARHSDLIVGAALKLGSGFMSETAFQYNQNNNQLVKSSVGFGYSPGERRVINVGYRYTRSNTTLDNQPINQFLISAQWPLTRRLYAIGRFNYDLAGDRVVDGLVGLQYDADCWALGVGVQRAANGINSSGQQNSSTRVMMQLTLKGLSTVDNGLVSAFRAGVPGYTPLPPPPPPMSRFSNYE.

A signal peptide spans M1–A39. The tract at residues P767 to E786 is disordered. A compositionally biased stretch (pro residues) spans T770–M779.

The protein belongs to the LptD family. In terms of assembly, component of the lipopolysaccharide transport and assembly complex. Interacts with LptE and LptA.

It localises to the cell outer membrane. Its function is as follows. Together with LptE, is involved in the assembly of lipopolysaccharide (LPS) at the surface of the outer membrane. The chain is LPS-assembly protein LptD from Burkholderia lata (strain ATCC 17760 / DSM 23089 / LMG 22485 / NCIMB 9086 / R18194 / 383).